Reading from the N-terminus, the 493-residue chain is Cytoplasmic tRNA 2-thiolation protein 2 (493 aa).

S489 bears the Phosphoserine mark.

It belongs to the CTU2/NCS2 family. As to quaternary structure, interacts with NCS6 and URM1. May act by forming a heterodimer with NCS6.

The protein resides in the cytoplasm. The protein operates within tRNA modification; 5-methoxycarbonylmethyl-2-thiouridine-tRNA biosynthesis. Plays a central role in 2-thiolation of mcm(5)S(2)U at tRNA wobble positions of tRNA(Lys), tRNA(Glu) and tRNA(Gln). May act by forming a heterodimer with NCS6 that ligates sulfur from thiocarboxylated URM1 onto the uridine of tRNAs at wobble position. Prior mcm(5) tRNA modification by the elongator complex is required for 2-thiolation. May also be involved in protein urmylation and in invasive and pseudohyphal growth. Inhibits replication of Brome mosaic virus. The chain is Cytoplasmic tRNA 2-thiolation protein 2 from Saccharomyces cerevisiae (strain ATCC 204508 / S288c) (Baker's yeast).